Reading from the N-terminus, the 663-residue chain is Cyclic nucleotide-gated channel alpha-2 (663 aa).

The disordered stretch occupies residues 1–61 (MTEKANGVKS…QLAEMDAPQQ (61 aa)). Topologically, residues 1 to 144 (MTEKANGVKS…PAGDWYYRWL (144 aa)) are cytoplasmic. Residues 12–23 (PANNHNHHAPPA) are compositionally biased toward low complexity. The helical transmembrane segment at 145–166 (FLIALPVLYNWCLLVARACFSD) threads the bilayer. The Extracellular portion of the chain corresponds to 167–176 (LQKGYYIVWL). Residues 177–197 (VLDYVSDVVYIADLFIRLRTG) form a helical membrane-spanning segment. Topologically, residues 198 to 222 (FLEQGLLVKDTKKLRDNYIHTMQFK) are cytoplasmic. A helical transmembrane segment spans residues 223-241 (LDVASIIPTDLIYFAVGIH). Residues 242-246 (NPEVR) are Extracellular-facing. The helical transmembrane segment at 247–265 (FNRLLHFARMFEFFDRTET) threads the bilayer. At 266-272 (RTSYPNI) the chain is on the cytoplasmic side. Residues 270 to 378 (PNIFRISNLI…GNVGSMISNM (109 aa)) form an ion conduction pathway region. Residues 273–296 (FRISNLILYILIIIHWNACIYYAI) form a helical membrane-spanning segment. The Extracellular segment spans residues 297 to 319 (SKSIGFGVDTWVYPNITDPEYGY). 2 helical membrane passes run 320–354 (LSREYIYCLYWSTLTLTTIGETPPPVKDEEYLFVI) and 355–379 (FDFLIGVLIFATIVGNVGSMISNMN). The tract at residues 337 to 340 (TIGE) is selectivity filter. Residues 380-456 (ATRAEFQAKI…STLKKVRIFQ (77 aa)) are C-linker. The Cytoplasmic portion of the chain corresponds to 380–663 (ATRAEFQAKI…NSPEPPAEKP (284 aa)). Positions 460-580 (AGLLVELVLK…EERGREILMK (121 aa)) are cyclic nucleotide-binding domain. The 3',5'-cyclic GMP site is built by G520, S523, R536, and T537. 2 residues coordinate 3',5'-cyclic AMP: R536 and T537. Residues 597 to 651 (VQEKLEQLETNMDTLYTRFARLLAEYTGAQQKLKQRITVLETKMKQNNEDDSLSD) are a coiled coil. The tract at residues 640–663 (MKQNNEDDSLSDGMNSPEPPAEKP) is disordered.

Belongs to the cyclic nucleotide-gated cation channel (TC 1.A.1.5) family. CNGA2 subfamily. In terms of assembly, the olfactory cyclic nucleotide-gated channel is an heterotetramer composed of CNGA2, CNGA4 and CNGB1b subunits with 2:1:1 stoichiometry. In terms of tissue distribution, olfactory neurons.

It is found in the cell projection. The protein localises to the cilium membrane. The catalysed reaction is Ca(2+)(in) = Ca(2+)(out). The enzyme catalyses Na(+)(in) = Na(+)(out). It carries out the reaction K(+)(in) = K(+)(out). It catalyses the reaction NH4(+)(in) = NH4(+)(out). The catalysed reaction is Rb(+)(in) = Rb(+)(out). The enzyme catalyses Li(+)(in) = Li(+)(out). It carries out the reaction Cs(+)(in) = Cs(+)(out). Its function is as follows. Pore-forming subunit of the olfactory cyclic nucleotide-gated channel. Operates in the cilia of olfactory sensory neurons where chemical stimulation of the odorant is converted to an electrical signal. Mediates odorant-induced cAMP-dependent Ca(2+) influx triggering neuron depolarization. The rise of intracellular Ca(2+) levels potentiates the olfactory response by activating Ca(2+)-dependent Cl(-) channels, but it also serves as a negative feedback signal to desensitize the channel for rapid adaptation to odorants. Conducts cAMP- and cGMP-gated ion currents, with permeability for monovalent and divalent cations. The chain is Cyclic nucleotide-gated channel alpha-2 from Bos taurus (Bovine).